A 338-amino-acid chain; its full sequence is D-alanine--D-alanine ligase (338 aa).

The ATP-grasp domain maps to 120–324 (KRVMLAEGLP…YEDLCIEVLK (205 aa)). 150–205 (PDKLGLPLIVKPAREGSSIGLTKVTERAGMADAVAQAEKLDADILCEQFISGDEVT) provides a ligand contact to ATP. Positions 277, 291, and 293 each coordinate Mg(2+).

This sequence belongs to the D-alanine--D-alanine ligase family. The cofactor is Mg(2+). Requires Mn(2+) as cofactor.

The protein resides in the cytoplasm. The catalysed reaction is 2 D-alanine + ATP = D-alanyl-D-alanine + ADP + phosphate + H(+). Its pathway is cell wall biogenesis; peptidoglycan biosynthesis. Functionally, cell wall formation. The polypeptide is D-alanine--D-alanine ligase (Polaromonas sp. (strain JS666 / ATCC BAA-500)).